The sequence spans 326 residues: Transposase for insertion sequence element IS4351 (326 aa).

The Integrase catalytic domain occupies 156-317; it reads IDERPEIVEL…TPNEKFKQII (162 aa).

This sequence belongs to the transposase IS30 family.

In terms of biological role, required for the transposition of the insertion element. The chain is Transposase for insertion sequence element IS4351 from Bacteroides fragilis.